Reading from the N-terminus, the 235-residue chain is Enolase-phosphatase E1 (235 aa).

The protein belongs to the HAD-like hydrolase superfamily. MasA/MtnC family. As to quaternary structure, monomer. It depends on Mg(2+) as a cofactor.

It catalyses the reaction 5-methylsulfanyl-2,3-dioxopentyl phosphate + H2O = 1,2-dihydroxy-5-(methylsulfanyl)pent-1-en-3-one + phosphate. It functions in the pathway amino-acid biosynthesis; L-methionine biosynthesis via salvage pathway; L-methionine from S-methyl-5-thio-alpha-D-ribose 1-phosphate: step 3/6. It participates in amino-acid biosynthesis; L-methionine biosynthesis via salvage pathway; L-methionine from S-methyl-5-thio-alpha-D-ribose 1-phosphate: step 4/6. Functionally, bifunctional enzyme that catalyzes the enolization of 2,3-diketo-5-methylthiopentyl-1-phosphate (DK-MTP-1-P) into the intermediate 2-hydroxy-3-keto-5-methylthiopentenyl-1-phosphate (HK-MTPenyl-1-P), which is then dephosphorylated to form the acireductone 1,2-dihydroxy-3-keto-5-methylthiopentene (DHK-MTPene). This is Enolase-phosphatase E1 from Gluconacetobacter diazotrophicus (strain ATCC 49037 / DSM 5601 / CCUG 37298 / CIP 103539 / LMG 7603 / PAl5).